We begin with the raw amino-acid sequence, 359 residues long: Small ribosomal subunit biogenesis GTPase RsgA (359 aa).

Residues 101 to 259 (KRKGSQAIAS…LMDNPGIREV (159 aa)) form the CP-type G domain. GTP-binding positions include 149–152 (NKKD) and 201–209 (GSSGAGKST). 4 residues coordinate Zn(2+): Cys284, Cys289, His291, and Cys297. A disordered region spans residues 331–359 (DPEEARKKKQKDKQMSKALQKRLKDKGRK). Over residues 349–359 (LQKRLKDKGRK) the composition is skewed to basic residues.

The protein belongs to the TRAFAC class YlqF/YawG GTPase family. RsgA subfamily. Monomer. Associates with 30S ribosomal subunit, binds 16S rRNA. It depends on Zn(2+) as a cofactor.

The protein resides in the cytoplasm. One of several proteins that assist in the late maturation steps of the functional core of the 30S ribosomal subunit. Helps release RbfA from mature subunits. May play a role in the assembly of ribosomal proteins into the subunit. Circularly permuted GTPase that catalyzes slow GTP hydrolysis, GTPase activity is stimulated by the 30S ribosomal subunit. In Leptospira interrogans serogroup Icterohaemorrhagiae serovar Lai (strain 56601), this protein is Small ribosomal subunit biogenesis GTPase RsgA.